Consider the following 1419-residue polypeptide: DNA-directed RNA polymerase subunit beta' (1419 aa).

Residues C71, C73, C86, and C89 each coordinate Zn(2+). The Mg(2+) site is built by D461, D463, and D465. C815, C889, C896, and C899 together coordinate Zn(2+).

It belongs to the RNA polymerase beta' chain family. As to quaternary structure, the RNAP catalytic core consists of 2 alpha, 1 beta, 1 beta' and 1 omega subunit. When a sigma factor is associated with the core the holoenzyme is formed, which can initiate transcription. It depends on Mg(2+) as a cofactor. Requires Zn(2+) as cofactor.

It carries out the reaction RNA(n) + a ribonucleoside 5'-triphosphate = RNA(n+1) + diphosphate. Its function is as follows. DNA-dependent RNA polymerase catalyzes the transcription of DNA into RNA using the four ribonucleoside triphosphates as substrates. The polypeptide is DNA-directed RNA polymerase subunit beta' (Actinobacillus succinogenes (strain ATCC 55618 / DSM 22257 / CCUG 43843 / 130Z)).